Here is an 81-residue protein sequence, read N- to C-terminus: Large ribosomal subunit protein bL31B (81 aa).

Belongs to the bacterial ribosomal protein bL31 family. Type B subfamily. In terms of assembly, part of the 50S ribosomal subunit.

The polypeptide is Large ribosomal subunit protein bL31B (Bdellovibrio bacteriovorus (strain ATCC 15356 / DSM 50701 / NCIMB 9529 / HD100)).